We begin with the raw amino-acid sequence, 1220 residues long: DNA-directed RNA polymerase subunit beta' (1220 aa).

Positions 60, 62, 75, and 78 each coordinate Zn(2+). Residues Asp449, Asp451, and Asp453 each coordinate Mg(2+). Zn(2+)-binding residues include Cys818, Cys892, Cys899, and Cys902.

The protein belongs to the RNA polymerase beta' chain family. In terms of assembly, the RNAP catalytic core consists of 2 alpha, 1 beta, 1 beta' and 1 omega subunit. When a sigma factor is associated with the core the holoenzyme is formed, which can initiate transcription. Mg(2+) serves as cofactor. The cofactor is Zn(2+).

It catalyses the reaction RNA(n) + a ribonucleoside 5'-triphosphate = RNA(n+1) + diphosphate. In terms of biological role, DNA-dependent RNA polymerase catalyzes the transcription of DNA into RNA using the four ribonucleoside triphosphates as substrates. This is DNA-directed RNA polymerase subunit beta' from Lacticaseibacillus paracasei (strain ATCC 334 / BCRC 17002 / CCUG 31169 / CIP 107868 / KCTC 3260 / NRRL B-441) (Lactobacillus paracasei).